The chain runs to 155 residues: Cytochrome c-type biogenesis protein CcmE (155 aa).

Topologically, residues 1-8 (MNPLRKKR) are cytoplasmic. Residues 9-29 (LLIIVALLAGVGLAVTLALSA) traverse the membrane as a helical; Signal-anchor for type II membrane protein segment. Residues 30–155 (LQENINLFYT…AASPTPVKQG (126 aa)) are Periplasmic-facing. Heme contacts are provided by histidine 124 and tyrosine 128.

The protein belongs to the CcmE/CycJ family.

Its subcellular location is the cell inner membrane. Its function is as follows. Heme chaperone required for the biogenesis of c-type cytochromes. Transiently binds heme delivered by CcmC and transfers the heme to apo-cytochromes in a process facilitated by CcmF and CcmH. The chain is Cytochrome c-type biogenesis protein CcmE from Pseudomonas syringae pv. syringae (strain B728a).